A 526-amino-acid polypeptide reads, in one-letter code: DNA polymerase epsilon subunit B (526 aa).

It belongs to the DNA polymerase epsilon subunit B family. As to quaternary structure, subunit of the DNA polymerase II. Interacts with POL2A (via C-terminus).

It localises to the nucleus. In terms of biological role, as accessory component of DNA polymerase II participates in chromosomal DNA replication. Required for the timing and determination of cell fate during plant embryogenesis and root pole development, by promoting cell cycle and cell type patterning. Necessary for proper shoot (SAM) and root apical meristem (RAM) functions. Is essential to promote the first divisions of the zygote. This Arabidopsis thaliana (Mouse-ear cress) protein is DNA polymerase epsilon subunit B.